Reading from the N-terminus, the 270-residue chain is Tryptophan synthase alpha chain (270 aa).

Residues glutamate 49 and aspartate 60 each act as proton acceptor in the active site.

Belongs to the TrpA family. Tetramer of two alpha and two beta chains.

It carries out the reaction (1S,2R)-1-C-(indol-3-yl)glycerol 3-phosphate + L-serine = D-glyceraldehyde 3-phosphate + L-tryptophan + H2O. Its pathway is amino-acid biosynthesis; L-tryptophan biosynthesis; L-tryptophan from chorismate: step 5/5. Its function is as follows. The alpha subunit is responsible for the aldol cleavage of indoleglycerol phosphate to indole and glyceraldehyde 3-phosphate. The protein is Tryptophan synthase alpha chain of Pseudomonas fluorescens (strain ATCC BAA-477 / NRRL B-23932 / Pf-5).